Consider the following 176-residue polypeptide: Adenylyl-sulfate kinase (176 aa).

Position 12-19 (12-19 (GLSGAGKS)) interacts with ATP. Catalysis depends on Ser-86, which acts as the Phosphoserine intermediate.

It belongs to the APS kinase family.

It carries out the reaction adenosine 5'-phosphosulfate + ATP = 3'-phosphoadenylyl sulfate + ADP + H(+). It functions in the pathway sulfur metabolism; hydrogen sulfide biosynthesis; sulfite from sulfate: step 2/3. Functionally, catalyzes the synthesis of activated sulfate. This Gloeothece citriformis (strain PCC 7424) (Cyanothece sp. (strain PCC 7424)) protein is Adenylyl-sulfate kinase.